The chain runs to 124 residues: Fluoride-specific ion channel FluC (124 aa).

A run of 4 helical transmembrane segments spans residues 4 to 24, 35 to 55, 62 to 82, and 95 to 115; these read LLFVALGGSIGAVLRYLMSII, FGTLLVNVLGSFFMGIVYALG, PELKALVGVGLLGALTTFSTF, and WFKSLINVLLNVSLCIFMVYL. Positions 74 and 77 each coordinate Na(+).

The protein belongs to the fluoride channel Fluc/FEX (TC 1.A.43) family.

Its subcellular location is the cell inner membrane. It catalyses the reaction fluoride(in) = fluoride(out). Its activity is regulated as follows. Na(+) is not transported, but it plays an essential structural role and its presence is essential for fluoride channel function. In terms of biological role, fluoride-specific ion channel. Important for reducing fluoride concentration in the cell, thus reducing its toxicity. This is Fluoride-specific ion channel FluC from Shewanella denitrificans (strain OS217 / ATCC BAA-1090 / DSM 15013).